A 144-amino-acid polypeptide reads, in one-letter code: Large ribosomal subunit protein uL15 (144 aa).

The disordered stretch occupies residues 1 to 58 (MNLSNLRAPRKANEKKKRVGRGMGSGMGKTSARGHKGQRSRSGSRMMRGFEGGQMPLH). Over residues 8 to 20 (APRKANEKKKRVG) the composition is skewed to basic residues. Over residues 40–49 (SRSGSRMMRG) the composition is skewed to low complexity.

The protein belongs to the universal ribosomal protein uL15 family. As to quaternary structure, part of the 50S ribosomal subunit.

Binds to the 23S rRNA. This is Large ribosomal subunit protein uL15 from Koribacter versatilis (strain Ellin345).